Here is a 264-residue protein sequence, read N- to C-terminus: Acyl-[acyl-carrier-protein]--UDP-N-acetylglucosamine O-acyltransferase (264 aa).

Belongs to the transferase hexapeptide repeat family. LpxA subfamily. Homotrimer.

Its subcellular location is the cytoplasm. The enzyme catalyses a (3R)-hydroxyacyl-[ACP] + UDP-N-acetyl-alpha-D-glucosamine = a UDP-3-O-[(3R)-3-hydroxyacyl]-N-acetyl-alpha-D-glucosamine + holo-[ACP]. It participates in glycolipid biosynthesis; lipid IV(A) biosynthesis; lipid IV(A) from (3R)-3-hydroxytetradecanoyl-[acyl-carrier-protein] and UDP-N-acetyl-alpha-D-glucosamine: step 1/6. In terms of biological role, involved in the biosynthesis of lipid A, a phosphorylated glycolipid that anchors the lipopolysaccharide to the outer membrane of the cell. This Rickettsia felis (strain ATCC VR-1525 / URRWXCal2) (Rickettsia azadi) protein is Acyl-[acyl-carrier-protein]--UDP-N-acetylglucosamine O-acyltransferase.